A 412-amino-acid chain; its full sequence is Putative competence-damage inducible protein (412 aa).

Belongs to the CinA family.

The sequence is that of Putative competence-damage inducible protein from Bacillus thuringiensis (strain Al Hakam).